The primary structure comprises 207 residues: Recombination protein RecR (207 aa).

The segment at 60-75 adopts a C4-type zinc-finger fold; it reads CRRCHNISDSGVCTIC. Residues 83-178 enclose the Toprim domain; the sequence is STLCVVENIR…RVSVIARGIA (96 aa).

Belongs to the RecR family.

May play a role in DNA repair. It seems to be involved in an RecBC-independent recombinational process of DNA repair. It may act with RecF and RecO. This is Recombination protein RecR from Porphyromonas gingivalis (strain ATCC 33277 / DSM 20709 / CIP 103683 / JCM 12257 / NCTC 11834 / 2561).